The primary structure comprises 179 residues: Large ribosomal subunit protein uL5 (179 aa).

It belongs to the universal ribosomal protein uL5 family. As to quaternary structure, part of the 50S ribosomal subunit; part of the 5S rRNA/L5/L18/L25 subcomplex. Contacts the 5S rRNA and the P site tRNA. Forms a bridge to the 30S subunit in the 70S ribosome.

Functionally, this is one of the proteins that bind and probably mediate the attachment of the 5S RNA into the large ribosomal subunit, where it forms part of the central protuberance. In the 70S ribosome it contacts protein S13 of the 30S subunit (bridge B1b), connecting the 2 subunits; this bridge is implicated in subunit movement. Contacts the P site tRNA; the 5S rRNA and some of its associated proteins might help stabilize positioning of ribosome-bound tRNAs. The protein is Large ribosomal subunit protein uL5 of Bacillus anthracis (strain A0248).